The following is a 226-amino-acid chain: Glutathione S-transferase kappa 1 (226 aa).

16–18 (SPY) contacts glutathione. N6-succinyllysine occurs at positions 36 and 49. Asn-53 serves as a coordination point for glutathione. An N6-acetyllysine; alternate mark is found at Lys-68 and Lys-74. Residues Lys-68 and Lys-74 each carry the N6-succinyllysine; alternate modification. An N6-acetyllysine modification is found at Lys-85. Residues Lys-93 and Lys-116 each carry the N6-acetyllysine; alternate modification. N6-succinyllysine; alternate is present on residues Lys-93 and Lys-116. Lys-144 carries the N6-succinyllysine modification. The residue at position 158 (Lys-158) is an N6-acetyllysine; alternate. Lys-158 carries the N6-succinyllysine; alternate modification. Residue Lys-165 is modified to N6-acetyllysine. Lys-167 and Lys-177 each carry N6-acetyllysine; alternate. N6-succinyllysine; alternate is present on residues Lys-167 and Lys-177. Leu-183 is a binding site for glutathione. Position 193 is an N6-succinyllysine (Lys-193). 200-201 (SD) is a glutathione binding site.

Belongs to the GST superfamily. Kappa family. Homodimer.

The protein resides in the mitochondrion matrix. The catalysed reaction is RX + glutathione = an S-substituted glutathione + a halide anion + H(+). Functionally, glutathione S-transferase that catalyzes the conjugation of glutathione to exogenous and endogenous compounds. The polypeptide is Glutathione S-transferase kappa 1 (Gstk1) (Rattus norvegicus (Rat)).